The primary structure comprises 326 residues: Vitamin B12 import system permease protein BtuC (326 aa).

9 helical membrane-spanning segments follow: residues 15–35 (WLLCLSVLMLLALLLSLCAGE), 61–81 (LAVLLVGAALAISGAVMQALF), 88–108 (PGLLGVSNGAGVGLIAAVLLG), 112–132 (LPNWALGLCAIAGALIITLIL), 146–166 (LLAGVALGIICSALMTWAIYF), 184–204 (GGVDWRQSWLMLALIPVLLWI), 240–260 (GWMVGVSVALAGAIGFIGLVI), 274–294 (VLLPGCALAGASALLLADIVA), and 302–322 (ELPIGVVTATLGAPVFIWLLL).

It belongs to the binding-protein-dependent transport system permease family. FecCD subfamily. The complex is composed of two ATP-binding proteins (BtuD), two transmembrane proteins (BtuC) and a solute-binding protein (BtuF).

It is found in the cell inner membrane. Functionally, part of the ABC transporter complex BtuCDF involved in vitamin B12 import. Involved in the translocation of the substrate across the membrane. The protein is Vitamin B12 import system permease protein BtuC of Shigella boydii serotype 18 (strain CDC 3083-94 / BS512).